A 535-amino-acid polypeptide reads, in one-letter code: Heparanase (535 aa).

A signal peptide spans 1 to 27 (MLRLLLLWLWGPLGALAQGAPAGTAPT). Heparan sulfate group contacts are provided by residues 54-56 (DAS) and T89. Positions 102–149 (PTSEERSYWKSQVNHDICRSEPVSAAVLRKLQVEWPFQELLLLREQYQ) are cleaved as a propeptide — linker peptide. A disulfide bridge links C119 with C171. Residue 150 to 154 (KEFKN) participates in heparan sulfate group binding. N192 and N209 each carry an N-linked (GlcNAc...) asparagine glycan. E217 functions as the Proton donor in the catalytic mechanism. Heparan sulfate group-binding positions include 262–272 (QPRGKTVKLLR), H288, and R295. Positions 280-409 (EVIDSLTWHH…LLFKKLVGPR (130 aa)) are required for heterodimerization with the heparanase 8 kDa subunit. E335 acts as the Nucleophile in catalysis. Residues 340–342 (YGG) and 381–383 (GNY) each bind heparan sulfate group. A disulfide bridge links C429 with C534. Residue N451 is glycosylated (N-linked (GlcNAc...) asparagine). The segment at 519–535 (FSYGFFVIRNAKIAACI) is required for transferring proheparanase to the Golgi apparatus, secretion and subsequent enzyme activity and for enhancement of PKB/AKT1 phosphorylation.

It belongs to the glycosyl hydrolase 79 family. In terms of assembly, heterodimer; heterodimer formation between the 8 kDa and the 50 kDa subunits is required for enzyme activity. Interacts with TF; the interaction, inhibited by heparin, enhances the generation of activated factor X and activates coagulation. Interacts with HRG; the interaction is enhanced at acidic pH, partially inhibits binding of HPSE to cell surface receptors and modulates its enzymatic activity. Interacts with SDC1; the interaction enhances the shedding of SDC1. Interacts with HPSE2. In terms of processing, proteolytically processed. The cleavage of the 65 kDa form leads to the generation of a linker peptide, and the 8 kDa and 50 kDa products. The active form, the 8/50 kDa heterodimer, is resistant to degradation. Complete removal of the linker peptide appears to be a prerequisite to the complete activation of the enzyme. N-glycosylated. Glycosylation of the 50 kDa subunit appears to be essential for its solubility. As to expression, expressed in skin, mainly in the stratum granulosum and the first layer of the stratum corneum in the upper part of the epidermis. Also detected in hair follicles and in sebaceous glands.

The protein resides in the lysosome membrane. It localises to the secreted. Its subcellular location is the nucleus. The enzyme catalyses endohydrolysis of (1-&gt;4)-beta-D-glycosidic bonds of heparan sulfate chains in heparan sulfate proteoglycan.. Its activity is regulated as follows. Inhibited by EDTA and activated by calcium and magnesium. Inhibited by laminarin sulfate and, to a lower extent, by heparin and sulfamin. Its function is as follows. Endoglycosidase that cleaves heparan sulfate proteoglycans (HSPGs) into heparan sulfate side chains and core proteoglycans. Participates in extracellular matrix (ECM) degradation and remodeling. Selectively cleaves the linkage between a glucuronic acid unit and an N-sulfo glucosamine unit carrying either a 3-O-sulfo or a 6-O-sulfo group. Can also cleave the linkage between a glucuronic acid unit and an N-sulfo glucosamine unit carrying a 2-O-sulfo group, but not linkages between a glucuronic acid unit and a 2-O-sulfated iduronic acid moiety. It is essentially inactive at neutral pH but becomes active under acidic conditions such as during tumor invasion and in inflammatory processes. Facilitates cell migration associated with metastasis, wound healing and inflammation. Enhances shedding of syndecans, and increases endothelial invasion and angiogenesis in myelomas. Acts as a procoagulant by increasing the generation of activation factor X in the presence of tissue factor and activation factor VII. Increases cell adhesion to the extracellular matrix (ECM), independent of its enzymatic activity. Induces AKT1/PKB phosphorylation via lipid rafts increasing cell mobility and invasion. Heparin increases this AKT1/PKB activation. Regulates osteogenesis. Enhances angiogenesis through up-regulation of SRC-mediated activation of VEGF. Implicated in hair follicle inner root sheath differentiation and hair homeostasis. The sequence is that of Heparanase (Hpse) from Mus musculus (Mouse).